We begin with the raw amino-acid sequence, 652 residues long: Maternal embryonic leucine zipper kinase (652 aa).

Residues 13 to 265 (YELHETIGTG…VKHLLSHPWL (253 aa)) form the Protein kinase domain. ATP-binding positions include 19 to 27 (IGTGGFAKV) and Lys-42. Asp-134 acts as the Proton acceptor in catalysis. Thr-169 bears the Phosphothreonine; by autocatalysis mark. Ser-173 carries the phosphoserine; by autocatalysis modification. Residues 284 to 323 (VDEDCVTELSVFYKCSRTSTSRLISEWNYDHITASYLLLH) form a UBA-like region. The autoinhibitory region stretch occupies residues 328–652 (HGKPVRLKRP…VEDILSSCKV (325 aa)). Phosphothreonine occurs at positions 415, 450, 452, 482, and 484. The segment at 443 to 492 (FLHPAPWTPTPRRKQNEKKGILTTPNKNSHTKEKNQSKETPTKKPITTGE) is disordered. Positions 472 to 484 (HTKEKNQSKETPT) are enriched in basic and acidic residues. Phosphoserine occurs at positions 499, 506, and 518. The 50-residue stretch at 603 to 652 (SDFGKVTMQFELEVCQLSKSEMVGIRRQRLKGDAWVYKRLVEDILSSCKV) folds into the KA1 domain.

This sequence belongs to the protein kinase superfamily. CAMK Ser/Thr protein kinase family. SNF1 subfamily. Post-translationally, autophosphorylated: autophosphorylation of the T-loop at Thr-169 and Ser-173 is required for activation. Phosphorylated by the maturation promoting factor (MPF), composed of cdk1 and a cyclin-B. Also phosphorylated by some MAPK. Phosphorylated during oocyte maturation. Dephosphorylation destabilizes the protein. Degraded when cells exit mitosis.

The protein localises to the cell membrane. It catalyses the reaction L-seryl-[protein] + ATP = O-phospho-L-seryl-[protein] + ADP + H(+). The enzyme catalyses L-threonyl-[protein] + ATP = O-phospho-L-threonyl-[protein] + ADP + H(+). With respect to regulation, activated by autophosphorylation of the T-loop at Thr-169 and Ser-173: in contrast to other members of the SNF1 subfamily, phosphorylation at Thr-169 is not mediated by STK11/LKB1 but via autophosphorylation instead. Serine/threonine-protein kinase involved in various processes such as cell cycle regulation, self-renewal of stem cells, apoptosis and splicing regulation. Also plays a role in primitive hematopoiesis, possibly by affecting the expression of genes critical for hematopoiesis. Plays a role in cytokinesis during early development. This Xenopus tropicalis (Western clawed frog) protein is Maternal embryonic leucine zipper kinase (melk).